Here is a 212-residue protein sequence, read N- to C-terminus: MRIGILGGTFDPIHYGHIRPAMEVKASLKLDKILLMPNHIPPHKNTTHSSTAQRLEMVAQVCEALTGFELCDIEAKRDSPSYTVVTLKQLSRLYPDDELFFIMGMDSFIHLQSWHKWQQLFELANIVVCQRPGWHLAEGHPMQHELNVRHATLEALSHSSAPQHGRIFTVDISPQDISSTQIRSLLAMGEIPQDALLPVTLNYIQKQRLYFS.

This sequence belongs to the NadD family.

It catalyses the reaction nicotinate beta-D-ribonucleotide + ATP + H(+) = deamido-NAD(+) + diphosphate. Its pathway is cofactor biosynthesis; NAD(+) biosynthesis; deamido-NAD(+) from nicotinate D-ribonucleotide: step 1/1. Its function is as follows. Catalyzes the reversible adenylation of nicotinate mononucleotide (NaMN) to nicotinic acid adenine dinucleotide (NaAD). The chain is Probable nicotinate-nucleotide adenylyltransferase from Shewanella sp. (strain MR-7).